A 31-amino-acid polypeptide reads, in one-letter code: Cyclotide vinc-B (31 aa).

The segment at residues 1 to 31 is a cross-link (cyclopeptide (Gly-Asn)); that stretch reads GSIPACGESCFKGKCYTPGCTCSKYPLCAKN. 3 cysteine pairs are disulfide-bonded: Cys-6-Cys-20, Cys-10-Cys-22, and Cys-15-Cys-28.

The protein belongs to the cyclotide family. This is a cyclic peptide.

Probably participates in a plant defense mechanism. The polypeptide is Cyclotide vinc-B (Viola inconspicua).